Here is a 156-residue protein sequence, read N- to C-terminus: Small ribosomal subunit protein uS7 (156 aa).

Belongs to the universal ribosomal protein uS7 family. As to quaternary structure, part of the 30S ribosomal subunit. Contacts proteins S9 and S11.

Its function is as follows. One of the primary rRNA binding proteins, it binds directly to 16S rRNA where it nucleates assembly of the head domain of the 30S subunit. Is located at the subunit interface close to the decoding center, probably blocks exit of the E-site tRNA. This Syntrophus aciditrophicus (strain SB) protein is Small ribosomal subunit protein uS7.